Consider the following 293-residue polypeptide: Elongation factor Ts (293 aa).

Positions 80–83 (TDFV) are involved in Mg(2+) ion dislocation from EF-Tu.

Belongs to the EF-Ts family.

It is found in the cytoplasm. Its function is as follows. Associates with the EF-Tu.GDP complex and induces the exchange of GDP to GTP. It remains bound to the aminoacyl-tRNA.EF-Tu.GTP complex up to the GTP hydrolysis stage on the ribosome. The sequence is that of Elongation factor Ts from Burkholderia thailandensis (strain ATCC 700388 / DSM 13276 / CCUG 48851 / CIP 106301 / E264).